Consider the following 242-residue polypeptide: Arginine transport ATP-binding protein ArtP (242 aa).

The region spanning 3–241 (IQLNGINCFY…QTEAFKNYLS (239 aa)) is the ABC transporter domain. 35–42 (GPSGAGKS) serves as a coordination point for ATP.

This sequence belongs to the ABC transporter superfamily. As to quaternary structure, the complex is composed of two ATP-binding proteins (ArtP), two transmembrane proteins (ArtM and ArtQ) and two solute-binding proteins (ArtJ and ArtI).

It is found in the cell inner membrane. The catalysed reaction is a polar amino acid(out) + ATP + H2O = a polar amino acid(in) + ADP + phosphate + H(+). It catalyses the reaction L-arginine(out) + ATP + H2O = L-arginine(in) + ADP + phosphate + H(+). Its function is as follows. Part of the ABC transporter complex ArtPIQMJ involved in arginine transport. Probably responsible for energy coupling to the transport system. This chain is Arginine transport ATP-binding protein ArtP (artP), found in Escherichia coli O157:H7.